The sequence spans 517 residues: ATP synthase subunit alpha 2 (517 aa).

173 to 180 lines the ATP pocket; it reads GDRQTGKT.

It belongs to the ATPase alpha/beta chains family. As to quaternary structure, F-type ATPases have 2 components, CF(1) - the catalytic core - and CF(0) - the membrane proton channel. CF(1) has five subunits: alpha(3), beta(3), gamma(1), delta(1), epsilon(1). CF(0) has three main subunits: a(1), b(2) and c(9-12). The alpha and beta chains form an alternating ring which encloses part of the gamma chain. CF(1) is attached to CF(0) by a central stalk formed by the gamma and epsilon chains, while a peripheral stalk is formed by the delta and b chains.

Its subcellular location is the cell inner membrane. The enzyme catalyses ATP + H2O + 4 H(+)(in) = ADP + phosphate + 5 H(+)(out). Its function is as follows. Produces ATP from ADP in the presence of a proton gradient across the membrane. The alpha chain is a regulatory subunit. This Legionella pneumophila subsp. pneumophila (strain Philadelphia 1 / ATCC 33152 / DSM 7513) protein is ATP synthase subunit alpha 2.